Reading from the N-terminus, the 170-residue chain is Cyclic pyranopterin monophosphate synthase (170 aa).

Residues 89 to 91 (LCH) and 125 to 126 (ME) contribute to the substrate site. Aspartate 140 is a catalytic residue.

Belongs to the MoaC family. In terms of assembly, homohexamer; trimer of dimers.

The enzyme catalyses (8S)-3',8-cyclo-7,8-dihydroguanosine 5'-triphosphate = cyclic pyranopterin phosphate + diphosphate. It participates in cofactor biosynthesis; molybdopterin biosynthesis. In terms of biological role, catalyzes the conversion of (8S)-3',8-cyclo-7,8-dihydroguanosine 5'-triphosphate to cyclic pyranopterin monophosphate (cPMP). The polypeptide is Cyclic pyranopterin monophosphate synthase (Streptomyces coelicolor (strain ATCC BAA-471 / A3(2) / M145)).